Consider the following 61-residue polypeptide: Insect toxin LqhIT5 (61 aa).

Residues Asp-1–Gly-61 enclose the LCN-type CS-alpha/beta domain. 4 cysteine pairs are disulfide-bonded: Cys-10/Cys-60, Cys-14/Cys-35, Cys-21/Cys-42, and Cys-25/Cys-44.

The protein belongs to the long (4 C-C) scorpion toxin superfamily. Sodium channel inhibitor family. Beta subfamily. In terms of tissue distribution, expressed by the venom gland.

The protein localises to the secreted. Functionally, excitatory insect beta-toxins induce a spastic paralysis. They bind voltage-independently at site-4 of sodium channels (Nav) and shift the voltage of activation toward more negative potentials thereby affecting sodium channel activation and promoting spontaneous and repetitive firing. This toxin is active only on insects. It operates by inducing a fast contraction paralysis without depressant activity. It is more similar to the excitatory toxins in its mode of action and the depressant toxins in its primary structure. The chain is Insect toxin LqhIT5 from Leiurus hebraeus (Hebrew deathstalker scorpion).